A 652-amino-acid polypeptide reads, in one-letter code: Zinc finger protein 503 (652 aa).

Polar residues predominate over residues 1–11 (MSTAPSLSALR). The segment at 1-72 (MSTAPSLSAL…HAVPPSDPLR (72 aa)) is disordered. The span at 16–32 (SGGGGGGGGGGGSGGGS) shows a compositional bias: gly residues. A Phosphoserine modification is found at Ser107. 2 disordered regions span residues 126 to 283 (SQIG…GVPA) and 296 to 338 (INVD…SSVL). The span at 135–144 (PSSKLSSVAS) shows a compositional bias: low complexity. 2 stretches are compositionally biased toward gly residues: residues 145–157 (NGGG…NGAG) and 194–209 (GGGG…GGGV). Residue Lys213 is modified to N6-acetyllysine. Residues 221–230 (ATCQPFTPRT) are compositionally biased toward polar residues. Residues 231–244 (GSPSSSASACSPGG) show a composition bias toward low complexity. A phosphoserine mark is found at Ser235 and Ser241. A compositionally biased stretch (basic and acidic residues) spans 254-263 (EGKDDKKDPE). Residues 264-283 (AGGGGSSKGSGGASADGVPA) are compositionally biased toward gly residues. Positions 314–336 (GSDCGGSSSSSSGSGPSAPTSSS) are enriched in low complexity. A C2H2-type zinc finger spans residues 520 to 548 (HICNWVSANGPCDKRFATSEELLSHLRTH). Position 642 is an omega-N-methylarginine (Arg642).

The protein belongs to the Elbow/Noc family.

It localises to the nucleus. May function as a transcriptional repressor. The protein is Zinc finger protein 503 (Znf503) of Mus musculus (Mouse).